The chain runs to 351 residues: MQLKAKEELLRNMELGLIPDQEIRQLIRVELEKRLQWGYKETHEEQLSQLLDLVHSLKGMKMATEMENLDLKLYEAPMEFLKIQHGSNMKQSAGYYTDESTTLDEAEIAMLDLYMERAQIKDGQSVLDLGCGLGAVALFGANKFKKCQFTGVTSSVEQKDYIEGKCKELKLTNVKVLLADITTYETEERFDRIFAVELIEHMKNYQLLLKKISEWMKDDGLLFVEHVCHKTLAYHYEPVDAEDWYTNYIFPAGTLTLSSASMLLYFQDDVSVVNQWTLSGKHYSRSHEEWLKNMDKNIVEFKEIMRSITKTEKEAIKLLNFWRIFCMCGAELFGYKNGEEWMLTHLLFKKK.

S-adenosyl-L-methionine is bound by residues 91-92 (QS), 126-134 (VLDLGCGLG), 130-132 (GCG), and 153-158 (TSSVEQ). Cys326 is an active-site residue.

The protein belongs to the CFA/CMAS family. Expressed in roots, stems, flower buds and at lower levels, in leaves. Restricted to sieve elements of the phloem adjacent or proximal to laticifers.

The protein resides in the cytoplasm. The catalysed reaction is (S)-coclaurine + S-adenosyl-L-methionine = (S)-N-methylcoclaurine + S-adenosyl-L-homocysteine + H(+). It participates in alkaloid biosynthesis; (S)-reticuline biosynthesis; (S)-reticuline from (S)-norcoclaurine: step 2/4. Its function is as follows. Involved in the biosynthesis of benzylisoquinoline alkaloids. N-methyltransferase methylating (S)-coclaurine. 4'-O-methylcoclaurine and norlaudanine can also be used as substrates. This Papaver somniferum (Opium poppy) protein is (S)-coclaurine N-methyltransferase.